Consider the following 504-residue polypeptide: Outer capsid protein VP5 (504 aa).

The interval 1–42 is involved in membrane permeabilization; that stretch reads MGKFTSFLKRAGSATKNALTSDAAKRMYKMAGKTLQKVVESE.

This sequence belongs to the orbivirus VP5 family.

The protein localises to the virion. In terms of biological role, VP5 protein is one of the two proteins (with VP2) which constitute the virus particle outer capsid. Acts as a membrane permeabilization protein that mediates release of viral particles from endosomal compartments into the cytoplasm. Permeabilization activity is probably negatively regulated by VP2 and is triggered by endosomal degradation of VP2 and exposure to low pH. The chain is Outer capsid protein VP5 (Segment-6) from African horse sickness virus 6 (AHSV-6).